A 145-amino-acid polypeptide reads, in one-letter code: Ribonuclease H (145 aa).

In terms of domain architecture, RNase H type-1 spans 1-142; the sequence is MDTPVYLYTD…ADDLANRGAA (142 aa). Mg(2+) is bound by residues Asp-10, Glu-48, Asp-70, and Asp-134.

This sequence belongs to the RNase H family. In terms of assembly, monomer. Requires Mg(2+) as cofactor.

It is found in the cytoplasm. The catalysed reaction is Endonucleolytic cleavage to 5'-phosphomonoester.. Functionally, endonuclease that specifically degrades the RNA of RNA-DNA hybrids. The polypeptide is Ribonuclease H (Neisseria meningitidis serogroup C / serotype 2a (strain ATCC 700532 / DSM 15464 / FAM18)).